The chain runs to 177 residues: Large ribosomal subunit protein uL6 (177 aa).

The protein belongs to the universal ribosomal protein uL6 family. As to quaternary structure, part of the 50S ribosomal subunit.

Functionally, this protein binds to the 23S rRNA, and is important in its secondary structure. It is located near the subunit interface in the base of the L7/L12 stalk, and near the tRNA binding site of the peptidyltransferase center. The sequence is that of Large ribosomal subunit protein uL6 from Rhizobium rhizogenes (strain K84 / ATCC BAA-868) (Agrobacterium radiobacter).